The primary structure comprises 362 residues: Chorismate synthase (362 aa).

Arg47 is an NADP(+) binding site. FMN-binding positions include 124–126 (RSS), Gly286, 301–305 (KPTAT), and Arg327.

This sequence belongs to the chorismate synthase family. As to quaternary structure, homotetramer. It depends on FMNH2 as a cofactor.

The enzyme catalyses 5-O-(1-carboxyvinyl)-3-phosphoshikimate = chorismate + phosphate. Its pathway is metabolic intermediate biosynthesis; chorismate biosynthesis; chorismate from D-erythrose 4-phosphate and phosphoenolpyruvate: step 7/7. Functionally, catalyzes the anti-1,4-elimination of the C-3 phosphate and the C-6 proR hydrogen from 5-enolpyruvylshikimate-3-phosphate (EPSP) to yield chorismate, which is the branch point compound that serves as the starting substrate for the three terminal pathways of aromatic amino acid biosynthesis. This reaction introduces a second double bond into the aromatic ring system. This chain is Chorismate synthase, found in Rippkaea orientalis (strain PCC 8801 / RF-1) (Cyanothece sp. (strain PCC 8801)).